The following is a 632-amino-acid chain: Glycerophosphodiester phosphodiesterase domain-containing protein 4 (632 aa).

The Cytoplasmic segment spans residues 1–64 (MEETQDSSSS…GSCCCSRKEQ (64 aa)). The helical transmembrane segment at 65–85 (FFYMCLVIAFILSVLFLFVWV) threads the bilayer. The Extracellular segment spans residues 86–114 (ETSNEYNGFDWVVYLGTGCWFFWSILVLS). Residues 115-135 (AAGIMVAYTTLLLLLGFLLLW) form a helical membrane-spanning segment. The Cytoplasmic segment spans residues 136–147 (ERIELNLHTSHK). A helical transmembrane segment spans residues 148–168 (VFICLVIVLCSFLLAVLSHFW). Over 169–180 (KDKWLIAGLSLQ) the chain is Extracellular. Residues 181-201 (IFAPFVHLSLITVMIIISWPL) traverse the membrane as a helical segment. The Cytoplasmic segment spans residues 202 to 240 (SICVARLESEVKVRRYRMADYEQEIQERCNVFQRLRALQ). A helical transmembrane segment spans residues 241–261 (IAAGLSFLIILLCLYLMPLGI). At 262-542 (YSPCILKKEN…SRPLFFMTPG (281 aa)) the chain is on the extracellular side. Residues 276–533 (PTLFGHRGAP…DNIELLNQLS (258 aa)) form the GP-PDE domain. A divalent metal cation-binding residues include E308, D310, and H323. N343, N349, N384, and N473 each carry an N-linked (GlcNAc...) asparagine glycan. Residues 543–563 (FYMFMWLFLDIASAVIIGFVF) form a helical membrane-spanning segment. Topologically, residues 564-632 (CYNWIKEIKR…QKTEPKTENL (69 aa)) are cytoplasmic. The tract at residues 596–632 (ENNDASQQKPEVAPTSANLAPENMIELQKTEPKTENL) is disordered. Over residues 623 to 632 (QKTEPKTENL) the composition is skewed to basic and acidic residues.

Belongs to the glycerophosphoryl diester phosphodiesterase family. In terms of tissue distribution, detected in testis, in particular in spermatocytes.

Its subcellular location is the cytoplasm. The protein localises to the membrane. The chain is Glycerophosphodiester phosphodiesterase domain-containing protein 4 (Gdpd4) from Mus musculus (Mouse).